Here is a 955-residue protein sequence, read N- to C-terminus: Vacuolar membrane protease (955 aa).

At 1-16 (MASLRLPRANPLAFTR) the chain is on the cytoplasmic side. A helical membrane pass occupies residues 17-37 (WPVTVITAIVYLALLIPLLVV). Residues 38 to 390 (HHVVPSAPSS…STFVLFQLHT (353 aa)) are Vacuolar-facing. Residues Asn53 and Asn119 are each glycosylated (N-linked (GlcNAc...) asparagine). His174 and Asp186 together coordinate Zn(2+). The active-site Proton acceptor is Glu220. Glu221, Glu246, and His319 together coordinate Zn(2+). A helical membrane pass occupies residues 391–411 (LFALLVTLLIVGPLTLLFTSI). Topologically, residues 412–442 (ALTKADKMYLFRSSAKSEDRLDVVPLQGLRG) are cytoplasmic. A helical membrane pass occupies residues 443 to 463 (FFRFPFLFGIPTVVTVGLAYL). Over 464-473 (VTKVNPYIIH) the chain is Vacuolar. Residues 474-494 (SSAYAVWSMMVAAWVFLAWFV) traverse the membrane as a helical segment. Topologically, residues 495 to 508 (SRVADFARPSAFHR) are cytoplasmic. The helical transmembrane segment at 509–529 (IYTLTWMYVLSWVSAVIATVY) threads the bilayer. Over 530 to 533 (ANQR) the chain is Vacuolar. The helical transmembrane segment at 534-554 (GLAGGYFIFFFHAGIFLAKWI) threads the bilayer. The Cytoplasmic portion of the chain corresponds to 555–656 (SYLELFALPS…WSYALPKWTW (102 aa)). Over residues 574–590 (SASGRASGHGSRRGTTS) the composition is skewed to low complexity. The tract at residues 574–611 (SASGRASGHGSRRGTTSGEDDGEEAEEEPTESTSLLGS) is disordered. The segment covering 591 to 603 (GEDDGEEAEEEPT) has biased composition (acidic residues). The chain crosses the membrane as a helical span at residues 657 to 677 (VLQLLLTAPITLIMVGPLALL). The Vacuolar portion of the chain corresponds to 678 to 693 (TISAISQTGQDGGHPL). The helical transmembrane segment at 694-714 (FAYVAIAIFTTIMLTPLLPFI) threads the bilayer. Over 715–721 (HRYTYHV) the chain is Cytoplasmic. The helical transmembrane segment at 722-742 (PLFLLAVFLGTLIYNLVAFPF) threads the bilayer. Residues 743 to 955 (SDSNRLKLYY…RRAFEIGNDD (213 aa)) are Vacuolar-facing. Asn826 carries N-linked (GlcNAc...) asparagine glycosylation.

The protein belongs to the peptidase M28 family. The cofactor is Zn(2+).

The protein resides in the vacuole membrane. May be involved in vacuolar sorting and osmoregulation. This Aspergillus oryzae (strain ATCC 42149 / RIB 40) (Yellow koji mold) protein is Vacuolar membrane protease.